A 233-amino-acid polypeptide reads, in one-letter code: Small ribosomal subunit protein uS2 (233 aa).

It belongs to the universal ribosomal protein uS2 family.

The protein is Small ribosomal subunit protein uS2 of Bacillus cytotoxicus (strain DSM 22905 / CIP 110041 / 391-98 / NVH 391-98).